A 1257-amino-acid polypeptide reads, in one-letter code: MVFKPLTIAAAIAGLTPFVSAFDAQAKSNVAVYYGQGYGQQRLSHFCQETSLDIINIGFINTFPDQGAAGWPGSNFGNQCDGLTYEVDGVSTKLLSGCHQIAEDIPICQAAGKKVLLSLGGASPDNQQILSDASAVRFADFLWGAFGPQTEEWVSNDGPRPFGEVVVDGFDFDIEHNGGFGYATMVNRFRELFALVPERTFYISGAPQCPIPDPQLSDAIAQSPFDFVWVQFYNTAGCAASDSINGVSTGFNFDDWVDVIKRGANPDAKLYVGLPAGPGAAGAGYYLTPEEVYPLVDVYMNLYPETFGGIMLWEATASDENTFSGLTFADVIKDILVAVDPSPPVPSPSSSSVIASSTPVASSTPVASSAPASSTPISSGSPVPSSSAVSSSPAVSSTTESSSTQVVSGSVSASSSPITSSPVASSTPVASSAPSATSSAVASSSPIAPSSPVASSSAIASSSAIASSSAIASSSAIASSSAIASSSAIASSSAIASSSAIASSSAIASSSAIASSSAIASSSAIASSSAIASSSPVAPSSPVASSSPAVSSSAIVSSTPAVSTPVASSIPVISSPAIASGSAIASSSHVASSSTPAASSSPAVSSSPVASSSPALSSSPSASASSTPIIPSSTASSAVVSSSPTPSSSVVRSSSLLSSSSPALSSTRTPSNPVIPSSSAISITPSSTPVRSTSSVAPGKSSSAPVIPKPSSTVIATFTSSSGSLPSSSAPAGSGVPSSSTLPHPSSTSLLSSSPVSSAEPVSSSSAVGTSVGSSSNVVTGVSTRSSSSVVPSGTPIPPVSGTATESVTSSSSGSGSPTVPSSINTSSTDASSSSSASSVEPTSSGSVITSVTSSSASRVSSSSSSVVITNPSVPSDSSSSSGSELSTTSSTESTSSASSQTGAPTTSVSLGSSEAASTSTSGAAASGSGAQDSTKPTDHASTLSPSYSTPLASASGQTGSPTTVPAGIPTGNGSGLAPITSSITSAQAVPSVTSSGLESEPEPTITTTVIVTSYIDICPEGFTTITTTYTTTYCPATVSATATATAAVTNPPGAPAQTTSPSVPEGWTTTVTVCTHCAPTPTTVTLTLPATNRPSALASSTSAPNSPEDWTTTVSVCTDCGPTPTTVTVTIPVGAATGVDALTASPSGSQPAGESSPGQSAPTAPASTAPTTTETVIVVPSQSSTSQPVILGTGSVRASSTFHIQPSQSGSRVPVAPSGTAAGVSPVFTGAASRVSRLQHGAGAVSAFALFLLAAI.

The first 21 residues, 1–21 (MVFKPLTIAAAIAGLTPFVSA), serve as a signal peptide directing secretion. Positions 28–339 (SNVAVYYGQG…DVIKDILVAV (312 aa)) constitute a GH18 domain. Glu175 acts as the Proton donor in catalysis. 3 disordered regions span residues 364–429 (TPVA…STPV), 595–980 (TPAA…LAPI), and 1141–1174 (DALT…PTTT). A compositionally biased stretch (low complexity) spans 595–696 (TPAASSSPAV…STPVRSTSSV (102 aa)). The span at 700–715 (KSSSAPVIPKPSSTVI) shows a compositional bias: polar residues. Low complexity predominate over residues 716 to 935 (ATFTSSSGSL…ASGSGAQDST (220 aa)). Asn825 carries an N-linked (GlcNAc...) asparagine glycan. The segment covering 940-964 (HASTLSPSYSTPLASASGQTGSPTT) has biased composition (polar residues). N-linked (GlcNAc...) asparagine glycosylation occurs at Asn973. Polar residues predominate over residues 1145–1154 (ASPSGSQPAG). The segment covering 1156-1174 (SSPGQSAPTAPASTAPTTT) has biased composition (low complexity). Gly1231 carries the GPI-anchor amidated glycine lipid modification. Positions 1232-1257 (AASRVSRLQHGAGAVSAFALFLLAAI) are cleaved as a propeptide — removed in mature form.

The protein belongs to the glycosyl hydrolase 18 family. Chitinase class III subfamily. Post-translationally, O-glycosylated.

Its subcellular location is the cell membrane. The protein localises to the secreted. It localises to the cell wall. It carries out the reaction Random endo-hydrolysis of N-acetyl-beta-D-glucosaminide (1-&gt;4)-beta-linkages in chitin and chitodextrins.. GPI-anchored chitinase involved in the degradation of chitin, a component of the cell walls of fungi and exoskeletal elements of some animals (including worms and arthropods). Required to reshape the cell wall at the sites where cell wall remodeling and/or cell wall maturation actively take place such as sites of conidia formation. The polypeptide is Endochitinase A (ctcA) (Aspergillus niger (strain ATCC MYA-4892 / CBS 513.88 / FGSC A1513)).